The following is a 471-amino-acid chain: GDP-mannose transporter (471 aa).

Residues 1–13 are compositionally biased toward polar residues; the sequence is MSSGSRSFFTPQE. The interval 1–52 is disordered; the sequence is MSSGSRSFFTPQETRLELPQGAAHQTPDITRPASPSENDRAPFLNGGPSDAR. Residues 1 to 70 are Cytoplasmic-facing; it reads MSSGSRSFFT…ALRNDSEKPA (70 aa). The chain crosses the membrane as a helical span at residues 71–91; the sequence is VGIMALAPILCYCAASITMTV. At 92 to 101 the chain is on the lumenal side; that stretch reads VNKFTVSGRG. The helical transmembrane segment at 102–122 threads the bilayer; it reads FNMNLLVLLIQSTVGVTCVWI. Residues 123-139 lie on the Cytoplasmic side of the membrane; it reads AERAGLIQLRGLNAKDA. A helical membrane pass occupies residues 140–160; that stretch reads WNWMPLSIMLVFVIWTGSKAL. The Lumenal portion of the chain corresponds to 161–166; sequence QYLNIS. Asn164 carries an N-linked (GlcNAc...) asparagine glycan. The helical transmembrane segment at 167-187 threads the bilayer; sequence VYTIFKNLTIILIAYGEVMWF. Residues 188–193 are Cytoplasmic-facing; that stretch reads GGRVTR. A helical membrane pass occupies residues 194-214; the sequence is IVLCSFLFMVLSSVIAAWSDI. Over 215 to 279 the chain is Lumenal; that stretch reads SNVFAIGNLS…DVIEGFQGYG (65 aa). N-linked (GlcNAc...) asparagine glycosylation is present at Asn222. Residues 280–300 traverse the membrane as a helical segment; the sequence is LLSSGYVWMALNCICSATYVL. Topologically, residues 301-315 are cytoplasmic; the sequence is LMRKRIKVTGFKDWD. The helical transmembrane segment at 316 to 336 threads the bilayer; it reads TMFYNNFLSIPVLLLMSFLVE. Residues 337 to 354 lie on the Lumenal side of the membrane; that stretch reads DWSYANLHKNFPDDKQTK. Residues 355–375 form a helical membrane-spanning segment; the sequence is LISAIVFSGACAILISYTTAW. Residues 376–383 are Cytoplasmic-facing; the sequence is CIRATSST. The helical transmembrane segment at 384 to 404 threads the bilayer; sequence TYSMVGALNKLPVALSGMVFF. Residues 405-408 lie on the Lumenal side of the membrane; sequence HDPP. Residues 409 to 429 form a helical membrane-spanning segment; that stretch reads VTFSSVSAIAVGFFAGLVYAF. At 430 to 471 the chain is on the cytoplasmic side; the sequence is GKNKQAEAAKLGGHASANGSSSMSGSKDGSSLPMHTFNDRKD. Residues 442-460 show a composition bias toward low complexity; it reads GHASANGSSSMSGSKDGSS. The tract at residues 442-471 is disordered; that stretch reads GHASANGSSSMSGSKDGSSLPMHTFNDRKD.

This sequence belongs to the TPT transporter family. SLC35D subfamily. As to quaternary structure, homooligomer.

The protein resides in the golgi apparatus membrane. It is found in the cytoplasmic vesicle membrane. It localises to the endoplasmic reticulum membrane. Its function is as follows. Involved in the import of GDP-mannose from the cytoplasm into the Golgi lumen. The protein is GDP-mannose transporter (VRG4) of Mycosarcoma maydis (Corn smut fungus).